A 677-amino-acid chain; its full sequence is DNA-directed RNA polymerase subunit beta' (677 aa).

4 residues coordinate Zn(2+): Cys69, Cys71, Cys87, and Cys90. Mg(2+) contacts are provided by Asp489, Asp491, and Asp493.

This sequence belongs to the RNA polymerase beta' chain family. RpoC1 subfamily. In plastids the minimal PEP RNA polymerase catalytic core is composed of four subunits: alpha, beta, beta', and beta''. When a (nuclear-encoded) sigma factor is associated with the core the holoenzyme is formed, which can initiate transcription. It depends on Mg(2+) as a cofactor. Requires Zn(2+) as cofactor.

It is found in the plastid. Its subcellular location is the chloroplast. It carries out the reaction RNA(n) + a ribonucleoside 5'-triphosphate = RNA(n+1) + diphosphate. DNA-dependent RNA polymerase catalyzes the transcription of DNA into RNA using the four ribonucleoside triphosphates as substrates. The polypeptide is DNA-directed RNA polymerase subunit beta' (Daucus carota (Wild carrot)).